A 184-amino-acid chain; its full sequence is GTP-binding protein Rheb (184 aa).

Lysine 8 participates in a covalent cross-link: Glycyl lysine isopeptide (Lys-Gly) (interchain with G-Cter in ubiquitin). Residues serine 16 and valine 17 each contribute to the GDP site. Residue serine 16 participates in GTP binding. GTP is bound by residues glycine 18, lysine 19, serine 20, serine 21, valine 32, tyrosine 35, threonine 38, asparagine 119, and aspartate 122. Lysine 19, serine 20, and serine 21 together coordinate GDP. Serine 20 provides a ligand contact to Mg(2+). The Effector region signature appears at 35–43; sequence YDPTIENTF. Threonine 38 contributes to the GDP binding site. Threonine 38 contacts Mg(2+). GDP is bound at residue aspartate 122. Serine 130 carries the post-translational modification Phosphoserine; by MAPKAPK5. GDP is bound at residue alanine 150. Alanine 150 provides a ligand contact to GTP. Cysteine 181 is subject to Cysteine methyl ester. Residue cysteine 181 is the site of S-farnesyl cysteine attachment. A propeptide spans 182–184 (removed in mature form); it reads SVM.

This sequence belongs to the small GTPase superfamily. Rheb family. In terms of assembly, associates with the mTORC1 complex (MTOR, MLST8 and RPTOR) in a guanyl nucleotide-independent manner. Interacts with TSC2. Interacts with MCRS1; the interaction maintains RHEB at the lysosome in its active GTP-bound form and prevents its interaction with the mTORC1 complex inhibitor TSC2, ensuring activation of the mTORC1 complex by RHEB. Interacts (when prenylated) with PDE6D; this promotes release from membranes. In terms of processing, farnesylation is important for efficiently activating mTORC1-mediated signaling. Post-translationally, polyubiquitinated in response to amino acid, promoting its interaction with MTOR and mTORC1 activation. Deubiquitination by ATXN3 promotes recruitment of the TSC-TBC complex and RHEB inactivation by TSC2. Monoubiquitinated at Lys-8 by RNF152, promoting its association with the TSC-TBC complex. Deubiquitinated at Lys-8 by USP4, promoting mTORC1 activation. Phosphorylation by MAPKAPK5 impairs GTP-binding and inactivation. In terms of tissue distribution, expressed at high levels in normal adult cortex as well as a number of peripheral tissues, including lung and intestine.

It is found in the endomembrane system. The protein localises to the lysosome membrane. The protein resides in the golgi apparatus membrane. Its subcellular location is the endoplasmic reticulum membrane. It localises to the cytoplasm. It is found in the cytosol. It carries out the reaction GTP + H2O = GDP + phosphate + H(+). Its activity is regulated as follows. Alternates between an inactive form bound to GDP and an active form bound to GTP. Inactivated by the TSC-TBC complex via the GTPase activating protein (GAP) domain of TSC2. Autoinhibited by Tyr-35, which constrains the active site conformation, restricting the access of the catalytic Asp-65 to the nucleotide-binding pocket. Functionally, small GTPase that acts as an allosteric activator of the canonical mTORC1 complex, an evolutionarily conserved central nutrient sensor that stimulates anabolic reactions and macromolecule biosynthesis to promote cellular biomass generation and growth. In response to nutrients, growth factors or amino acids, specifically activates the protein kinase activity of MTOR, the catalytic component of the mTORC1 complex: acts by causing a conformational change that allows the alignment of residues in the active site of MTOR, thereby enhancing the phosphorylation of ribosomal protein S6 kinase (RPS6KB1 and RPS6KB2) and EIF4EBP1 (4E-BP1). RHEB is also required for localization of the TSC-TBC complex to lysosomal membranes. In response to starvation, RHEB is inactivated by the TSC-TBC complex, preventing activation of mTORC1. Has low intrinsic GTPase activity. The sequence is that of GTP-binding protein Rheb from Rattus norvegicus (Rat).